We begin with the raw amino-acid sequence, 101 residues long: Small ribosomal subunit protein bS18c (101 aa).

This sequence belongs to the bacterial ribosomal protein bS18 family. Part of the 30S ribosomal subunit.

It is found in the plastid. The protein resides in the chloroplast. In Eucalyptus globulus subsp. globulus (Tasmanian blue gum), this protein is Small ribosomal subunit protein bS18c.